We begin with the raw amino-acid sequence, 227 residues long: UPF0758 protein Dred_2549 (227 aa).

One can recognise an MPN domain in the interval 105–227 (IIRCPEDVCG…FTSLKSKGLI (123 aa)). Zn(2+) is bound by residues His-176, His-178, and Asp-189. A JAMM motif motif is present at residues 176–189 (HNHPSGDPTPSRED).

It belongs to the UPF0758 family.

In Desulforamulus reducens (strain ATCC BAA-1160 / DSM 100696 / MI-1) (Desulfotomaculum reducens), this protein is UPF0758 protein Dred_2549.